The sequence spans 440 residues: Argininosuccinate lyase (440 aa).

It belongs to the lyase 1 family. Argininosuccinate lyase subfamily.

The protein resides in the cytoplasm. It catalyses the reaction 2-(N(omega)-L-arginino)succinate = fumarate + L-arginine. The protein operates within amino-acid biosynthesis; L-arginine biosynthesis; L-arginine from L-ornithine and carbamoyl phosphate: step 3/3. This Clostridium botulinum (strain Okra / Type B1) protein is Argininosuccinate lyase.